Reading from the N-terminus, the 222-residue chain is Sigma non-opioid intracellular receptor 1 (222 aa).

Over 1 to 6 the chain is Lumenal; sequence MSLIRT. A helical transmembrane segment spans residues 7–29; that stretch reads ILKLVVVVGFLSLTVQFIRHWMA. Residues 30–222 are Cytoplasmic-facing; sequence NKQYVFTKEE…STFLTESGVL (193 aa). Residues 97–104 are important for ligand-binding; sequence SLTEYVLL. The interval 175 to 222 is C-terminal hydrophobic region; the sequence is FIPSTLGFALADTMFSTQDFLTLFYTARVYVKGMILEASTFLTESGVL.

This sequence belongs to the ERG2 family. Homotrimer.

It localises to the nucleus inner membrane. It is found in the nucleus outer membrane. The protein localises to the nucleus envelope. Its subcellular location is the cytoplasmic vesicle. The protein resides in the endoplasmic reticulum membrane. It localises to the membrane. Its function is as follows. May function in lipid transport from the endoplasmic reticulum and be involved in a wide array of cellular functions probably through regulation of the biogenesis of lipid microdomains at the plasma membrane. May regulate calcium efflux at the endoplasmic reticulum. The polypeptide is Sigma non-opioid intracellular receptor 1 (sigmar1) (Danio rerio (Zebrafish)).